The following is a 962-amino-acid chain: Protease 3 (962 aa).

Positions 1 to 23 (MPRSTWFKALLLLVALWGPAVQA) are cleaved as a signal peptide. Residue His-88 coordinates Zn(2+). Glu-91 (proton acceptor) is an active-site residue. Residues His-92 and Glu-169 each contribute to the Zn(2+) site.

Belongs to the peptidase M16 family. In terms of assembly, monomer. Zn(2+) is required as a cofactor.

The protein resides in the periplasm. It catalyses the reaction Preferential cleavage of 16-Tyr-|-Leu-17 and 25-Phe-|-Tyr-26 bonds of oxidized insulin B chain. Also acts on other substrates of Mw less than 7 kDa such as insulin and glucagon.. Its function is as follows. Endopeptidase that degrades small peptides of less than 7 kDa, such as glucagon and insulin. The polypeptide is Protease 3 (ptrA) (Salmonella typhimurium (strain LT2 / SGSC1412 / ATCC 700720)).